Reading from the N-terminus, the 219-residue chain is Orotate phosphoribosyltransferase (219 aa).

A 5-phospho-alpha-D-ribose 1-diphosphate-binding site is contributed by K26. 34 to 35 (FF) provides a ligand contact to orotate. Residues 72–73 (YK), R98, K99, K102, H104, and 124–132 (DDVITAGTA) contribute to the 5-phospho-alpha-D-ribose 1-diphosphate site. 2 residues coordinate orotate: T128 and R156.

It belongs to the purine/pyrimidine phosphoribosyltransferase family. PyrE subfamily. As to quaternary structure, homodimer. The cofactor is Mg(2+).

The catalysed reaction is orotidine 5'-phosphate + diphosphate = orotate + 5-phospho-alpha-D-ribose 1-diphosphate. Its pathway is pyrimidine metabolism; UMP biosynthesis via de novo pathway; UMP from orotate: step 1/2. In terms of biological role, catalyzes the transfer of a ribosyl phosphate group from 5-phosphoribose 1-diphosphate to orotate, leading to the formation of orotidine monophosphate (OMP). This Xanthomonas axonopodis pv. citri (strain 306) protein is Orotate phosphoribosyltransferase.